The chain runs to 1000 residues: MPAENQNTGQDRSSNSISKNGNSQVGCHTVPNEELNITVAVRCRGRNEREISMKSSVVVNVPDITGSKEISINTTGDTGITAQMNAKRYTVDKVFGPGASQDLIFDEVAGPLFQDFIKGYNCTVLVYGMTSTGKTYTMTGDEKLYNGELSDAAGIIPRVLLKLFDTLELQQNDYVVKCSFIELYNEELKDLLDSNSNGSSNTGFDGQFMKKLRIFDSSTANNTTSNSASSSRSNSRNSSPRSLNDLTPKAALLRKRLRTKSLPNTIKQQYQQQQAVNSRNNSSSNSGSTTNNASSNTNTNNGQRSSMAPNDQTNGIYIQNLQEFHITNAMEGLNLLQKGLKHRQVASTKMNDFSSRSHTIFTITLYKKHQDELFRISKMNLVDLAGSENINRSGALNQRAKEAGSINQSLLTLGRVINALVDKSGHIPFRESKLTRLLQDSLGGNTKTALIATISPAKVTSEETCSTLEYASKAKNIKNKPQLGSFIMKDILVKNITMELAKIKSDLLSTKSKEGIYMSQDHYKNLNSDLESYKNEVQECKREIESLTSKNALLVKDKLKSKETIQSQNCQIESLKTTIDHLRAQLDKQHKTEIEISDFNNKLQKLTEVMQMALHDYKKRELDLNQKFEMHITKEIKKLKSTLFLQLNTMQQESILQETNIQPNLDMIKNEVLTLMRTMQEKAELMYKDCVKKILNESPKFFNVVIEKIDIIRVDFQKFYKNIAENLSDISEENNNMKQYLKNHFFKNNHQELLNRHVDSTYENIEKRTNEFVENFKKVLNDHLDENKKLIMQNLTTATSAVIDQEMDLFEPKRVKWENSFDLINDCDSMNNEFYNSMAATLSQIKSTVDTSSNSMNESISVMKGQVEESENAISLLKNNTKFNDQFEQLINKHNMLKDNIKNSITSTHSHITNVDDIYNTIENIMKNYGNKENATKDEMIENILKEIPNLSKKMPLRLSNINSNSVQSVISPKKHAIEDENKSSENVDNEGSRKMLKIE.

The span at Met-1–Gly-26 shows a compositional bias: polar residues. A disordered region spans residues Met-1 to His-28. In terms of domain architecture, Kinesin motor spans Asn-36–Ile-477. Residue Gly-128–Thr-135 coordinates ATP. A compositionally biased stretch (low complexity) spans Ala-220–Ser-242. 2 disordered regions span residues Ala-220–Pro-248 and Lys-260–Gln-312. Over residues Ser-261–Val-276 the composition is skewed to polar residues. The segment covering Asn-277–Asn-301 has biased composition (low complexity). The span at Gly-302–Gln-312 shows a compositional bias: polar residues. Coiled coils occupy residues Met-518 to His-615 and Ile-860 to Ser-904. The segment at Val-970–Glu-1000 is disordered. A Phosphoserine modification is found at Ser-972. A compositionally biased stretch (basic and acidic residues) spans His-976–Glu-1000.

Belongs to the TRAFAC class myosin-kinesin ATPase superfamily. Kinesin family. BimC subfamily.

Its subcellular location is the cytoplasm. It localises to the cytoskeleton. It is found in the spindle. The protein localises to the mitochondrion. In terms of biological role, elongates the mitotic spindle by interacting with spindle microtubules to generate an outward force pushing spindle poles apart. Following spindle assembly, CIN8 and KIP1 apparently act to oppose a force, possibly generated by KAR3, that draws separated poles back together. This Saccharomyces cerevisiae (strain ATCC 204508 / S288c) (Baker's yeast) protein is Kinesin-like protein CIN8 (CIN8).